The primary structure comprises 759 residues: MEGIEESFAPLSPKSPFARRNGRSLRIQRLVDCQHFHYSSVELGPVRVAIIAINADENATERIKMRVESESNSWLVERSREDWAVFDRQLHRCVFERRHSRLDELFPLIHLETAKFEEVLVKYTERLSELTGSIITCYPVLKFLEIDSRGGHFEPAEETSINVPAIAAAVVTKDFEPTESSQLRLRVGDIVSITEMSTASPSEQTFWKAKLTISNQKIVDPQNARLGFEIGYFPRDCVMLIDDKRLPNPLNNEQKASTRNARRYMTTMFRNRRREPIFGLELTDLYMRTGKKVPVIVEKCCASIEDQGIVTGIYRQCGIQSNIQRLRAKFDSGAEPDLHEFGQRDIYSVSSLLKQYFRQLPNPLFTYQAYPKLIEAFEKEDSLSEKVESLRFSLETMPEAHYRTAKFLMEHLTRLCKSKSLTDMTSKNLAIVWSPNLFRPPPTLNGADTHLLSGLNVHTAICDFFIENSESLFVNDIDEEQSKCTSVENSFTTISKSATMSDMRSESESKWPRFFRGKSVEGFWKFNRKQQTSTGELCGSPTSEVKWRSRSTRSHSTDAAFQSSRTDSFIQLMHTGMDQIREGMRIFRARARSMRPTSRPPPSPRTRRARFSNGSSNNVQKLNESDIQHEIPLATTEPSITPEPKNTVDPHQIMTRTISVNDSDDQSFEENGLREMRERKVMFKAATQEHVATFHERSSPVEEWSSDSRESLHLEMSRYDNVSPSGTITRNQREPITNLSPAAQMLFFESSRASHLFSA.

Residues 164–243 enclose the SH3 domain; sequence PAIAAAVVTK…PRDCVMLIDD (80 aa). The 194-residue stretch at 280-473 folds into the Rho-GAP domain; the sequence is LELTDLYMRT…FFIENSESLF (194 aa). The disordered stretch occupies residues 591 to 624; that stretch reads ARSMRPTSRPPPSPRTRRARFSNGSSNNVQKLNE. A compositionally biased stretch (polar residues) spans 612–622; that stretch reads SNGSSNNVQKL.

As to expression, expressed in coelomocytes, excretory cells, uterine-seam cells and GLR cells.

Its function is as follows. Functions as a GTPase-activating protein (GAP) for ced-10/rac-1 and CDC42. In Caenorhabditis elegans, this protein is GTPase-activating protein rrc-1 (rrc-1).